A 171-amino-acid polypeptide reads, in one-letter code: Thioredoxin-2 (171 aa).

The 129-residue stretch at 41-169 (AFNASPSTSQ…LQALISANHP (129 aa)) folds into the Thioredoxin domain. Cysteines 95 and 98 form a disulfide.

The protein belongs to the thioredoxin family.

It is found in the cytoplasm. The protein localises to the vacuole. Thioredoxin involved in responses to oxidative and cell wall stresses. Plays an important role in appressorium formation on hyphal tips. TRX2 may affect invasive growth via the MST11-MST7-PMK1 pathway since it is required for the proper folding or dimerization of MAPKK MST7. The sequence is that of Thioredoxin-2 from Pyricularia oryzae (strain 70-15 / ATCC MYA-4617 / FGSC 8958) (Rice blast fungus).